Here is a 500-residue protein sequence, read N- to C-terminus: NAD(P)H-quinone oxidoreductase chain 4, chloroplastic (500 aa).

Helical transmembrane passes span 4–24, 35–55, 80–100, 113–130, 134–154, 167–187, 208–228, 242–262, 274–294, 305–325, 330–350, 364–384, 386–406, 416–436, and 462–482; these read FYWL…IALL, YTIC…CYHF, LGID…TTLA, LFHF…GSFS, LLLF…LLSM, FILY…GMGL, ALEI…SPII, HYST…YGLV, SIFS…AALT, IAYS…SITD, GAIL…FLAG, MGGI…FSMA, LALP…GIIT, ILIT…SLSM, and IFIF…PDFV.

Belongs to the complex I subunit 4 family.

The protein resides in the plastid. It is found in the chloroplast thylakoid membrane. It catalyses the reaction a plastoquinone + NADH + (n+1) H(+)(in) = a plastoquinol + NAD(+) + n H(+)(out). The catalysed reaction is a plastoquinone + NADPH + (n+1) H(+)(in) = a plastoquinol + NADP(+) + n H(+)(out). This chain is NAD(P)H-quinone oxidoreductase chain 4, chloroplastic, found in Nymphaea alba (White water-lily).